A 160-amino-acid chain; its full sequence is uncharacterized protein (160 aa).

Tyr49 is subject to Phosphotyrosine.

May be involved in the assembly, structure, or function of the flagellum. May polymerize to form a filamentous structure that is part of the flagellum. This is an uncharacterized protein from Bacillus subtilis (strain 168).